We begin with the raw amino-acid sequence, 163 residues long: Anthranilate 1,2-dioxygenase small subunit (163 aa).

This sequence belongs to the bacterial ring-hydroxylating dioxygenase beta subunit family. In terms of assembly, the anthranilate dioxygenase (AntDO) multicomponent enzyme system is composed of an oxygenase component and a NADH:acceptor reductase component (AntC). The oxygenase component is a heterohexamer of 3 large (AntA) and 3 small (AntB) subunits.

It carries out the reaction anthranilate + NADH + O2 + 3 H(+) = catechol + NH4(+) + CO2 + NAD(+). The catalysed reaction is anthranilate + NADPH + O2 + 3 H(+) = catechol + NH4(+) + CO2 + NADP(+). It participates in aromatic compound metabolism; anthranilate degradation via hydroxylation; catechol from anthranilate: step 1/1. In terms of biological role, component of anthranilate dioxygenase multicomponent enzyme system which catalyzes the incorporation of both atoms of molecular oxygen into anthranilate to form catechol. This is Anthranilate 1,2-dioxygenase small subunit from Acinetobacter baylyi (strain ATCC 33305 / BD413 / ADP1).